The chain runs to 1784 residues: Sodium channel protein type 4 subunit alpha B (1784 aa).

Residues 1–130 (MARLLPPTGT…RAAIRILIHS (130 aa)) are Cytoplasmic-facing. The tract at residues 29-48 (AEEAAEQERMKEQNVKVAEE) is disordered. The stretch at 112–429 (CLSPFNPVRR…VVAMAYAEQN (318 aa)) is one I repeat. The helical transmembrane segment at 131–149 (LFSLVIMLTILTNCVFMAM) threads the bilayer. Topologically, residues 150-156 (SDPPGWS) are extracellular. A helical membrane pass occupies residues 157–177 (KILEYVFTGIYTFEAMVKVLS). Topologically, residues 178–191 (RGFCIGDFTFLRDP) are cytoplasmic. The chain crosses the membrane as a helical span at residues 192-209 (WNWLDFMVISMAYLTEFV). Over 210–215 (DLGNIS) the chain is Extracellular. Residue Asn-213 is glycosylated (N-linked (GlcNAc...) asparagine). The helical transmembrane segment at 216 to 232 (ALRTFRVLRALKTITVI) threads the bilayer. Residues 233–251 (PGLKTIVGALIQSVKKLAD) lie on the Cytoplasmic side of the membrane. Residues 252–271 (VMILTVFCLSVFALIGLQLF) form a helical membrane-spanning segment. The Extracellular segment spans residues 272 to 366 (MGNLRQKCVL…PNYGYTSYDN (95 aa)). The cysteines at positions 279 and 335 are disulfide-linked. N-linked (GlcNAc...) asparagine glycans are attached at residues Asn-291, Asn-304, and Asn-337. Cys-344 and Cys-350 form a disulfide bridge. The pore-forming intramembrane region spans 367–391 (FGWAFLALFRLMTQDFWENLFQLTL). Topologically, residues 392 to 398 (RAAGKTY) are extracellular. A helical transmembrane segment spans residues 399-419 (MIFFVVIIFLGSFYLINLILA). Topologically, residues 420–568 (VVAMAYAEQN…RIVYLFVMDP (149 aa)) are cytoplasmic. Residues 455 to 478 (EQKNGMVNGSKTSLSSKKKGDNDQ) form a disordered region. The stretch at 550-821 (CCIPWVKFKR…QIAISRITRG (272 aa)) is one II repeat. Residues 569–587 (FVDLGITLCIVLNTVFMAM) form a helical membrane-spanning segment. At 588-598 (EHYPMSVHVEE) the chain is on the extracellular side. The helical transmembrane segment at 599–618 (VLAIGNLVFTGIFAAEMVLK) threads the bilayer. Residues 619 to 632 (LIALDPYYYFQVGW) are Cytoplasmic-facing. A helical transmembrane segment spans residues 633-652 (NIFDSIIVTMSLVELMLADV). Residues 653–654 (EG) are Extracellular-facing. The helical transmembrane segment at 655-672 (LSVLRSFRLMRVFKLAKS) threads the bilayer. Topologically, residues 673–688 (WPTLNMLIKIIGNSVG) are cytoplasmic. Residues 689 to 707 (ALGNLTLVLAIIVFIFAVV) traverse the membrane as a helical segment. Topologically, residues 708–736 (GMQLFGKSYTDSVCKISSDCELPRWHMAD) are extracellular. Cys-721 and Cys-727 are joined by a disulfide. Residues 737–757 (FFHAFLIIFRVLCGEWIETMW) constitute an intramembrane region (pore-forming). The Extracellular segment spans residues 758–768 (DCMEVAGQGMC). Cys-759 and Cys-768 are disulfide-bonded. The chain crosses the membrane as a helical span at residues 769–787 (IIVFMMVMVIGNLVVLNLF). Residues 788–973 (LALLLSSFSG…TCFAIVEHSY (186 aa)) are Cytoplasmic-facing. The disordered stretch occupies residues 870 to 928 (PIANGESDDDDGNGSSEDEDDEGRDINMKKKNGDESSTCSTVDKPPEVEDLVEEEEEDL). The segment covering 875-892 (ESDDDDGNGSSEDEDDEG) has biased composition (acidic residues). A compositionally biased stretch (basic and acidic residues) spans 893-903 (RDINMKKKNGD). Over residues 917-928 (VEDLVEEEEEDL) the composition is skewed to acidic residues. The III repeat unit spans residues 954–1269 (KGKAWWNFRK…KKYYNAMKKL (316 aa)). The helical transmembrane segment at 974-991 (FETFIIFMILLSSGALAF) threads the bilayer. Topologically, residues 992–1004 (EDIYIEQRRMIKI) are extracellular. The chain crosses the membrane as a helical span at residues 1005 to 1023 (ILEYADQVFTYVFVVEMLL). The Cytoplasmic portion of the chain corresponds to 1024 to 1037 (KWVAYGFKVYFTNA). The chain crosses the membrane as a helical span at residues 1038-1056 (WCWLDFLIVDVSLISLTAN). Residues 1057-1064 (ILGYSELG) are Extracellular-facing. Residues 1065–1083 (AIKSLRTLRALRPLRALSR) form a helical membrane-spanning segment. At 1084–1101 (FEGMRVVVVNALVGAIPS) the chain is on the cytoplasmic side. The helical transmembrane segment at 1102–1121 (IFNVLLVCLIFWLIFSIMGV) threads the bilayer. The Extracellular portion of the chain corresponds to 1122-1173 (NLFAGKFYYCFNETSEEVFDHNVVNNKTDCYELMEFHPEVRWMNGKINFDNV). Residues Cys-1131 and Cys-1151 are joined by a disulfide bond. N-linked (GlcNAc...) asparagine glycosylation is found at Asn-1133 and Asn-1147. Residues 1174–1195 (GMGYLALLQVATFKGWMDIMYS) constitute an intramembrane region (pore-forming). Topologically, residues 1196-1212 (AVDSRAIESQPVYEANL) are extracellular. A helical membrane pass occupies residues 1213-1234 (YMYIYFVIFIIFGSFFTLNLFI). Topologically, residues 1235–1297 (GVIIDNFNQQ…LVFDFVTQQF (63 aa)) are cytoplasmic. Residues 1253-1255 (IFM) form an important for rapid channel inactivation region. One copy of the IV repeat lies at 1278-1575 (IPRPTNCCQG…WEKFDPTASQ (298 aa)). Residues 1298 to 1315 (FDIFIMVMICLNMVTMMV) traverse the membrane as a helical segment. The Extracellular portion of the chain corresponds to 1316 to 1326 (ETDDQSAEIEE). Residues 1327 to 1345 (ILFYINFAFIILFTGECVL) traverse the membrane as a helical segment. Topologically, residues 1346-1357 (KITALRYHYFSI) are cytoplasmic. A helical transmembrane segment spans residues 1358–1375 (GWNIFDFVVVILSILGIG). The Extracellular segment spans residues 1376 to 1388 (LADLIEKYFVSPT). A helical transmembrane segment spans residues 1389-1405 (LFRVIRLARIGRVLRLI). The Cytoplasmic segment spans residues 1406–1424 (RGAKGIRTLLFALMMSLPA). The chain crosses the membrane as a helical span at residues 1425–1442 (LFNIGLLLFLIMFIFSIF). Topologically, residues 1443–1464 (GMSNFAYVKKEVGIDDMMNFET) are extracellular. The pore-forming intramembrane region spans 1465–1487 (FGNSIICMFMITTSAGWDGLLAP). The Extracellular segment spans residues 1488–1516 (ILNSPPDCDPDVDNPGSTTRGNCGNAAVG). An intrachain disulfide couples Cys-1495 to Cys-1510. Residues 1517-1539 (IVFFCSYIVMSFLVVVNMYIAII) form a helical membrane-spanning segment. Residues 1540-1784 (LENFNVATEE…AADNLRESIV (245 aa)) are Cytoplasmic-facing. Positions 1669 to 1698 (EEVAASTIQRAYRSHILKRCVKQASYMYRD) constitute an IQ domain.

Belongs to the sodium channel (TC 1.A.1.10) family. Nav1.4/SCN4A subfamily. Voltage-gated sodium (Nav) channels consist of an ion-conducting alpha subunit which is functional on its own associated with regulatory beta subunits. Post-translationally, lacks the cysteine which covalently binds the conotoxin GVIIJ. This cysteine (position 719) is speculated in other sodium channel subunits alpha to be implied in covalent binding with the sodium channel subunit beta-2 or beta-4. As to expression, expressed in skeletal muscle, heart, brain, spinal cord, and eye.

It is found in the cell membrane. It catalyses the reaction Na(+)(in) = Na(+)(out). Functionally, pore-forming subunit of a voltage-gated sodium (Nav) channel that directly mediates the depolarizing phase of action potentials in excitable membranes. Navs, also called VGSCs (voltage-gated sodium channels) or VDSCs (voltage-dependent sodium channels), operate by switching between closed and open conformations depending on the voltage difference across the membrane. In the open conformation they allow Na(+) ions to selectively pass through the pore, along their electrochemical gradient. The influx of Na+ ions provokes membrane depolarization, initiating the propagation of electrical signals throughout cells and tissues. The polypeptide is Sodium channel protein type 4 subunit alpha B (scn4ab) (Danio rerio (Zebrafish)).